Consider the following 346-residue polypeptide: Methylthioribose-1-phosphate isomerase (346 aa).

Residues 48–50 (RGA), arginine 88, and glutamine 192 contribute to the substrate site. Aspartate 233 (proton donor) is an active-site residue. Substrate is bound at residue 243–244 (NK).

This sequence belongs to the eIF-2B alpha/beta/delta subunits family. MtnA subfamily.

The catalysed reaction is 5-(methylsulfanyl)-alpha-D-ribose 1-phosphate = 5-(methylsulfanyl)-D-ribulose 1-phosphate. It participates in amino-acid biosynthesis; L-methionine biosynthesis via salvage pathway; L-methionine from S-methyl-5-thio-alpha-D-ribose 1-phosphate: step 1/6. Its function is as follows. Catalyzes the interconversion of methylthioribose-1-phosphate (MTR-1-P) into methylthioribulose-1-phosphate (MTRu-1-P). This is Methylthioribose-1-phosphate isomerase from Alcanivorax borkumensis (strain ATCC 700651 / DSM 11573 / NCIMB 13689 / SK2).